The following is a 404-amino-acid chain: Cysteine desulfurase IscS (404 aa).

Residues 75–76, asparagine 155, glutamine 183, and 203–205 each bind pyridoxal 5'-phosphate; these read AT and SAH. An N6-(pyridoxal phosphate)lysine modification is found at lysine 206. Threonine 243 contributes to the pyridoxal 5'-phosphate binding site. Catalysis depends on cysteine 328, which acts as the Cysteine persulfide intermediate. A [2Fe-2S] cluster-binding site is contributed by cysteine 328.

It belongs to the class-V pyridoxal-phosphate-dependent aminotransferase family. NifS/IscS subfamily. As to quaternary structure, homodimer. Forms a heterotetramer with IscU, interacts with other sulfur acceptors. Requires pyridoxal 5'-phosphate as cofactor.

It is found in the cytoplasm. It catalyses the reaction (sulfur carrier)-H + L-cysteine = (sulfur carrier)-SH + L-alanine. It functions in the pathway cofactor biosynthesis; iron-sulfur cluster biosynthesis. Master enzyme that delivers sulfur to a number of partners involved in Fe-S cluster assembly, tRNA modification or cofactor biosynthesis. Catalyzes the removal of elemental sulfur atoms from cysteine to produce alanine. Functions as a sulfur delivery protein for Fe-S cluster synthesis onto IscU, an Fe-S scaffold assembly protein, as well as other S acceptor proteins. The polypeptide is Cysteine desulfurase IscS (Colwellia psychrerythraea (strain 34H / ATCC BAA-681) (Vibrio psychroerythus)).